We begin with the raw amino-acid sequence, 88 residues long: Translation initiation factor IF-1 1 (88 aa).

One can recognise an S1-like domain in the interval 1–72 (MSKEDMIELE…TKGRINFRHP (72 aa)). The disordered stretch occupies residues 66 to 88 (RINFRHPTANPGAGPRPSHHHRR).

It belongs to the IF-1 family. Component of the 30S ribosomal translation pre-initiation complex which assembles on the 30S ribosome in the order IF-2 and IF-3, IF-1 and N-formylmethionyl-tRNA(fMet); mRNA recruitment can occur at any time during PIC assembly.

It is found in the cytoplasm. Its function is as follows. One of the essential components for the initiation of protein synthesis. Stabilizes the binding of IF-2 and IF-3 on the 30S subunit to which N-formylmethionyl-tRNA(fMet) subsequently binds. Helps modulate mRNA selection, yielding the 30S pre-initiation complex (PIC). Upon addition of the 50S ribosomal subunit IF-1, IF-2 and IF-3 are released leaving the mature 70S translation initiation complex. The sequence is that of Translation initiation factor IF-1 1 from Chromobacterium violaceum (strain ATCC 12472 / DSM 30191 / JCM 1249 / CCUG 213 / NBRC 12614 / NCIMB 9131 / NCTC 9757 / MK).